The chain runs to 31 residues: Cytochrome b6-f complex subunit 6 (31 aa).

Residues 4–24 (VISYLSLLFISFLFALTLFIV) traverse the membrane as a helical segment.

The protein belongs to the PetL family. The 4 large subunits of the cytochrome b6-f complex are cytochrome b6, subunit IV (17 kDa polypeptide, PetD), cytochrome f and the Rieske protein, while the 4 small subunits are PetG, PetL, PetM and PetN. The complex functions as a dimer.

The protein resides in the plastid. The protein localises to the chloroplast thylakoid membrane. Its function is as follows. Component of the cytochrome b6-f complex, which mediates electron transfer between photosystem II (PSII) and photosystem I (PSI), cyclic electron flow around PSI, and state transitions. PetL is important for photoautotrophic growth as well as for electron transfer efficiency and stability of the cytochrome b6-f complex. This chain is Cytochrome b6-f complex subunit 6, found in Chara vulgaris (Common stonewort).